The primary structure comprises 445 residues: Argininosuccinate lyase (445 aa).

It belongs to the lyase 1 family. Argininosuccinate lyase subfamily.

The protein localises to the cytoplasm. The catalysed reaction is 2-(N(omega)-L-arginino)succinate = fumarate + L-arginine. It functions in the pathway amino-acid biosynthesis; L-arginine biosynthesis; L-arginine from L-ornithine and carbamoyl phosphate: step 3/3. This Xylella fastidiosa (strain Temecula1 / ATCC 700964) protein is Argininosuccinate lyase.